The sequence spans 554 residues: 3-(3-hydroxy-phenyl)propionate/3-hydroxycinnamic acid hydroxylase (554 aa).

FAD-binding positions include 17 to 46 (QVAI…VVEK) and 285 to 295 (FRIDRVLLAGD).

Belongs to the PheA/TfdB FAD monooxygenase family. Requires FAD as cofactor.

The enzyme catalyses 3-(3-hydroxyphenyl)propanoate + NADH + O2 + H(+) = 3-(2,3-dihydroxyphenyl)propanoate + NAD(+) + H2O. It carries out the reaction (2E)-3-(3-hydroxyphenyl)prop-2-enoate + NADH + O2 + H(+) = (2E)-3-(2,3-dihydroxyphenyl)prop-2-enoate + NAD(+) + H2O. It participates in aromatic compound metabolism; 3-phenylpropanoate degradation. Catalyzes the insertion of one atom of molecular oxygen into position 2 of the phenyl ring of 3-(3-hydroxyphenyl)propionate (3-HPP) and hydroxycinnamic acid (3HCI). This chain is 3-(3-hydroxy-phenyl)propionate/3-hydroxycinnamic acid hydroxylase, found in Escherichia coli (strain K12 / DH10B).